The sequence spans 197 residues: OV-16 antigen (197 aa).

The N-terminal stretch at 1 to 16 (MHCLQVVIAIVLYSFG) is a signal peptide. 4 N-linked (GlcNAc...) asparagine glycosylation sites follow: asparagine 56, asparagine 61, asparagine 119, and asparagine 124.

Belongs to the phosphatidylethanolamine-binding protein family. Hypodermis, cuticle and uterus.

This is OV-16 antigen (OV16) from Onchocerca volvulus.